Here is a 90-residue protein sequence, read N- to C-terminus: Sec-independent protein translocase protein TatA (90 aa).

A helical transmembrane segment spans residues 1–21 (MGSMSIWHWVIVAVIVMLLFG). The interval 44–90 (AEDETPPAVQAAPPPAEPVRTIPHATETSPGTAIPASHLPGGERKPV) is disordered.

This sequence belongs to the TatA/E family. As to quaternary structure, the Tat system comprises two distinct complexes: a TatABC complex, containing multiple copies of TatA, TatB and TatC subunits, and a separate TatA complex, containing only TatA subunits. Substrates initially bind to the TatABC complex, which probably triggers association of the separate TatA complex to form the active translocon.

It localises to the cell inner membrane. Its function is as follows. Part of the twin-arginine translocation (Tat) system that transports large folded proteins containing a characteristic twin-arginine motif in their signal peptide across membranes. TatA could form the protein-conducting channel of the Tat system. The chain is Sec-independent protein translocase protein TatA from Methylobacterium radiotolerans (strain ATCC 27329 / DSM 1819 / JCM 2831 / NBRC 15690 / NCIMB 10815 / 0-1).